Here is a 199-residue protein sequence, read N- to C-terminus: IMP cyclohydrolase (199 aa).

It belongs to the archaeal IMP cyclohydrolase family.

It catalyses the reaction IMP + H2O = 5-formamido-1-(5-phospho-D-ribosyl)imidazole-4-carboxamide. Its pathway is purine metabolism; IMP biosynthesis via de novo pathway; IMP from 5-formamido-1-(5-phospho-D-ribosyl)imidazole-4-carboxamide: step 1/1. Functionally, catalyzes the cyclization of 5-formylamidoimidazole-4-carboxamide ribonucleotide to IMP. This is IMP cyclohydrolase from Methanothrix thermoacetophila (strain DSM 6194 / JCM 14653 / NBRC 101360 / PT) (Methanosaeta thermophila).